Consider the following 189-residue polypeptide: RPW8-like protein 1 (189 aa).

The region spanning 1–153 (MPLVELLTSA…ITRQPMDIIE (153 aa)) is the RPW8 domain. The chain crosses the membrane as a helical span at residues 7–24 (LTSAALGLSLQLLHDAII). Coiled-coil stretches lie at residues 65 to 92 (FRKVIEELKRLLEKAIRLVDAYAELKLR) and 126 to 147 (DIKKLMGKMSEMNTKLDDITRQ). The N-linked (GlcNAc...) asparagine glycan is linked to N177.

The protein belongs to the plant RPW8 protein family.

It is found in the membrane. Its function is as follows. Probable disease resistance (R) protein. This chain is RPW8-like protein 1, found in Arabidopsis thaliana (Mouse-ear cress).